We begin with the raw amino-acid sequence, 124 residues long: Protein Rev (124 aa).

Residue serine 5 is modified to Phosphoserine; by host CK2. Residues 19 to 27 form a homomultimerization region; it reads IIKILYQSN. The interval 25–51 is disordered; that stretch reads QSNPYPSPEGTRKARRNRRRRWRARQK. The Nuclear localization signal and RNA-binding (RRE) signature appears at 35-51; it reads TRKARRNRRRRWRARQK. Basic residues predominate over residues 37 to 50; it reads KARRNRRRRWRARQ. A Nuclear export signal and binding to XPO1 motif is present at residues 74-85; the sequence is LELPELDKLSLQ. Residues 90–106 show a composition bias toward polar residues; sequence TQDVGTSNTSQPQTATG. Residues 90–124 are disordered; the sequence is TQDVGTSNTSQPQTATGETVPAGGNYSILGKGAKN.

The protein belongs to the HIV-1 REV protein family. As to quaternary structure, homomultimer; when bound to the RRE. Multimeric assembly is essential for activity and may involve XPO1. Binds to human KPNB1, XPO1, TNPO1, RANBP5 and IPO7. Interacts with the viral Integrase. Interacts with human KHDRBS1. Interacts with human NAP1; this interaction decreases Rev multimerization and stimulates its activity. Interacts with human DEAD-box helicases DDX3 and DDX24; these interactions may serve for viral RNA export to the cytoplasm and packaging, respectively. Interacts with human PSIP1; this interaction may inhibit HIV-1 DNA integration by promoting dissociation of the Integrase-LEDGF/p75 complex. Asymmetrically arginine dimethylated at one site by host PRMT6. Methylation impairs the RNA-binding activity and export of viral RNA from the nucleus to the cytoplasm. Post-translationally, phosphorylated by protein kinase CK2. Presence of, and maybe binding to the N-terminus of the regulatory beta subunit of CK2 is necessary for CK2-mediated Rev's phosphorylation.

The protein localises to the host nucleus. It localises to the host nucleolus. Its subcellular location is the host cytoplasm. Escorts unspliced or incompletely spliced viral pre-mRNAs (late transcripts) out of the nucleus of infected cells. These pre-mRNAs carry a recognition sequence called Rev responsive element (RRE) located in the env gene, that is not present in fully spliced viral mRNAs (early transcripts). This function is essential since most viral proteins are translated from unspliced or partially spliced pre-mRNAs which cannot exit the nucleus by the pathway used by fully processed cellular mRNAs. Rev itself is translated from a fully spliced mRNA that readily exits the nucleus. Rev's nuclear localization signal (NLS) binds directly to KPNB1/Importin beta-1 without previous binding to KPNA1/Importin alpha-1. KPNB1 binds to the GDP bound form of RAN (Ran-GDP) and targets Rev to the nucleus. In the nucleus, the conversion from Ran-GDP to Ran-GTP dissociates Rev from KPNB1 and allows Rev's binding to the RRE in viral pre-mRNAs. Rev multimerization on the RRE via cooperative assembly exposes its nuclear export signal (NES) to the surface. Rev can then form a complex with XPO1/CRM1 and Ran-GTP, leading to nuclear export of the complex. Conversion from Ran-GTP to Ran-GDP mediates dissociation of the Rev/RRE/XPO1/RAN complex, so that Rev can return to the nucleus for a subsequent round of export. Beside KPNB1, also seems to interact with TNPO1/Transportin-1, RANBP5/IPO5 and IPO7/RANBP7 for nuclear import. The nucleoporin-like HRB/RIP is an essential cofactor that probably indirectly interacts with Rev to release HIV RNAs from the perinuclear region to the cytoplasm. The sequence is that of Protein Rev from Pan (chimpanzees).